A 430-amino-acid polypeptide reads, in one-letter code: Adenylosuccinate synthetase (430 aa).

Residues 12 to 18 (GDEGKGK) and 40 to 42 (GHT) each bind GTP. Residue Asp13 is the Proton acceptor of the active site. Asp13 and Gly40 together coordinate Mg(2+). IMP is bound by residues 13-16 (DEGK), 38-41 (NAGH), Thr128, Arg142, Gln223, Thr238, and Arg302. The active-site Proton donor is His41. Substrate is bound at residue 298-304 (VNTGRTR). Residues Arg304, 330-332 (KLD), and 412-414 (GVG) contribute to the GTP site.

This sequence belongs to the adenylosuccinate synthetase family. Homodimer. Mg(2+) serves as cofactor.

Its subcellular location is the cytoplasm. It carries out the reaction IMP + L-aspartate + GTP = N(6)-(1,2-dicarboxyethyl)-AMP + GDP + phosphate + 2 H(+). The protein operates within purine metabolism; AMP biosynthesis via de novo pathway; AMP from IMP: step 1/2. In terms of biological role, plays an important role in the de novo pathway of purine nucleotide biosynthesis. Catalyzes the first committed step in the biosynthesis of AMP from IMP. In Corynebacterium ammoniagenes (Brevibacterium ammoniagenes), this protein is Adenylosuccinate synthetase.